We begin with the raw amino-acid sequence, 166 residues long: Probable RNA-binding protein EIF1AD (166 aa).

Residues 5–89 form the S1-like domain; the sequence is TKRKHVVKEV…VKAEISFVLC (85 aa). Positions 6-12 match the Nuclear localization signal motif; that stretch reads KRKHVVK. A Phosphothreonine modification is found at threonine 33. Residues 56-65 carry the Nuclear localization signal motif; sequence KYRKNIWIKR. Positions 99 to 166 are disordered; that stretch reads DGHWPEAFSQ…EEESEEEEAA (68 aa). The segment covering 110–119 has biased composition (basic and acidic residues); it reads TEKDNNDRNR. Serine 132, serine 136, serine 137, serine 138, serine 156, and serine 160 each carry phosphoserine. Residues 156 to 166 are compositionally biased toward acidic residues; it reads SEEESEEEEAA.

The protein belongs to the EIF1AD family. As to quaternary structure, interacts with GAPDH and STAT1.

The protein resides in the nucleus. Its function is as follows. Plays a role into cellular response to oxidative stress. Decreases cell proliferation. The sequence is that of Probable RNA-binding protein EIF1AD (EIF1AD) from Bos taurus (Bovine).